The sequence spans 101 residues: Small ribosomal subunit protein uS14 (101 aa).

It belongs to the universal ribosomal protein uS14 family. Part of the 30S ribosomal subunit. Contacts proteins S3 and S10.

In terms of biological role, binds 16S rRNA, required for the assembly of 30S particles and may also be responsible for determining the conformation of the 16S rRNA at the A site. This is Small ribosomal subunit protein uS14 from Ruthia magnifica subsp. Calyptogena magnifica.